The sequence spans 122 residues: Large ribosomal subunit protein uL14c (122 aa).

The protein belongs to the universal ribosomal protein uL14 family. Part of the 50S ribosomal subunit.

Its subcellular location is the plastid. In terms of biological role, binds to 23S rRNA. The chain is Large ribosomal subunit protein uL14c from Cuscuta gronovii (Common dodder).